The primary structure comprises 78 residues: Acyl carrier protein (78 aa).

Positions 1 to 76 (MSLEERVKEI…DVINYLKEKV (76 aa)) constitute a Carrier domain. Ser36 carries the O-(pantetheine 4'-phosphoryl)serine modification.

Belongs to the acyl carrier protein (ACP) family. Post-translationally, 4'-phosphopantetheine is transferred from CoA to a specific serine of apo-ACP by AcpS. This modification is essential for activity because fatty acids are bound in thioester linkage to the sulfhydryl of the prosthetic group.

Its subcellular location is the cytoplasm. The protein operates within lipid metabolism; fatty acid biosynthesis. In terms of biological role, carrier of the growing fatty acid chain in fatty acid biosynthesis. This Aquifex aeolicus (strain VF5) protein is Acyl carrier protein.